We begin with the raw amino-acid sequence, 210 residues long: MKKFTKILSLSTLLFLAGCQSVLNEPTEVQQPGVQIPHNDAQWQQHLQQLAKIQSYSAKGQIGYISPEERFSSHFDWQYRTPANFGLELSSNLSSKSLKLHRNVRGLTISDSEGNSRSDRDMDSLMKEIIGVAFPIDQFAYWLKGQPEQDGNYIVNDKRQLSQFSYHINGEVWKASYVQYHEDRQPNLPKLIVLENGSQTLKIRVDQWAF.

The first 18 residues, 1-18, serve as a signal peptide directing secretion; the sequence is MKKFTKILSLSTLLFLAG. Cys-19 carries N-palmitoyl cysteine lipidation. Cys-19 carries S-diacylglycerol cysteine lipidation.

It belongs to the LolB family. As to quaternary structure, monomer.

The protein resides in the cell outer membrane. In terms of biological role, plays a critical role in the incorporation of lipoproteins in the outer membrane after they are released by the LolA protein. This chain is Outer-membrane lipoprotein LolB, found in Actinobacillus pleuropneumoniae serotype 5b (strain L20).